We begin with the raw amino-acid sequence, 506 residues long: ATP synthase subunit alpha, chloroplastic (506 aa).

Residue 170–177 coordinates ATP; the sequence is GDRQTGKT.

This sequence belongs to the ATPase alpha/beta chains family. F-type ATPases have 2 components, CF(1) - the catalytic core - and CF(0) - the membrane proton channel. CF(1) has five subunits: alpha(3), beta(3), gamma(1), delta(1), epsilon(1). CF(0) has four main subunits: a, b, b' and c.

It is found in the plastid. The protein resides in the chloroplast thylakoid membrane. It catalyses the reaction ATP + H2O + 4 H(+)(in) = ADP + phosphate + 5 H(+)(out). In terms of biological role, produces ATP from ADP in the presence of a proton gradient across the membrane. The alpha chain is a regulatory subunit. The protein is ATP synthase subunit alpha, chloroplastic of Euglena gracilis.